We begin with the raw amino-acid sequence, 80 residues long: Protein UL148A (80 aa).

A helical transmembrane segment spans residues 10 to 30 (WIPVCVVVVMTSVVLFAGLHV).

The protein localises to the host membrane. Functionally, plays a role in the down-regulation of the host NKG2D ligand MICA by utilizing the lysosomal pathway for its degradation. In turn, MICA reduction diminishes NK-cell killing of HCMV-infected cells. The chain is Protein UL148A (UL148A) from Human cytomegalovirus (strain Merlin) (HHV-5).